We begin with the raw amino-acid sequence, 445 residues long: Exodeoxyribonuclease 7 large subunit (445 aa).

This sequence belongs to the XseA family. As to quaternary structure, heterooligomer composed of large and small subunits.

It localises to the cytoplasm. It catalyses the reaction Exonucleolytic cleavage in either 5'- to 3'- or 3'- to 5'-direction to yield nucleoside 5'-phosphates.. In terms of biological role, bidirectionally degrades single-stranded DNA into large acid-insoluble oligonucleotides, which are then degraded further into small acid-soluble oligonucleotides. The protein is Exodeoxyribonuclease 7 large subunit of Shewanella oneidensis (strain ATCC 700550 / JCM 31522 / CIP 106686 / LMG 19005 / NCIMB 14063 / MR-1).